A 639-amino-acid polypeptide reads, in one-letter code: Mediator of RNA polymerase II transcription subunit 17 (639 aa).

Residues 160–187 (RLQNFNAAADKLLKSASRLENEVASETR) adopt a coiled-coil conformation.

The protein belongs to the Mediator complex subunit 17 family. Component of the Mediator complex.

The protein resides in the nucleus. In terms of biological role, component of the Mediator complex, a coactivator involved in the regulated transcription of nearly all RNA polymerase II-dependent genes. Mediator functions as a bridge to convey information from gene-specific regulatory proteins to the basal RNA polymerase II transcription machinery. Mediator is recruited to promoters by direct interactions with regulatory proteins and serves as a scaffold for the assembly of a functional preinitiation complex with RNA polymerase II and the general transcription factors. The protein is Mediator of RNA polymerase II transcription subunit 17 (srb4) of Neosartorya fischeri (strain ATCC 1020 / DSM 3700 / CBS 544.65 / FGSC A1164 / JCM 1740 / NRRL 181 / WB 181) (Aspergillus fischerianus).